Here is a 244-residue protein sequence, read N- to C-terminus: tRNA (guanine-N(7)-)-methyltransferase (244 aa).

Positions 75, 100, 127, and 150 each coordinate S-adenosyl-L-methionine. D150 is an active-site residue. Residues K154, D186, and 223-226 contribute to the substrate site; that span reads TRFE.

It belongs to the class I-like SAM-binding methyltransferase superfamily. TrmB family.

It catalyses the reaction guanosine(46) in tRNA + S-adenosyl-L-methionine = N(7)-methylguanosine(46) in tRNA + S-adenosyl-L-homocysteine. It functions in the pathway tRNA modification; N(7)-methylguanine-tRNA biosynthesis. In terms of biological role, catalyzes the formation of N(7)-methylguanine at position 46 (m7G46) in tRNA. The sequence is that of tRNA (guanine-N(7)-)-methyltransferase from Xylella fastidiosa (strain M12).